Here is a 263-residue protein sequence, read N- to C-terminus: MSDILEKILATKTEEVAAARKARPLASLRNDAETRRDIRDFAGALTRCQSAGRAGVIAEIKKASPSKGIIRPDFQPAAIAESYAGHGAACLSVLTDVRYFQGAADYLVAARDACDLPVLRKDFLVDEYQVFEARAMGADCILLIVAALDNARLADFEAIARELGMAVLVETHDAAELDRALRLASPLIGVNNRNLRTFDVSLDTTLSLLPVIQAEGRMAITESGISTPDDVIRMREAGVNSFLVGEAFMREADPGAALAHLFA.

It belongs to the TrpC family.

It catalyses the reaction 1-(2-carboxyphenylamino)-1-deoxy-D-ribulose 5-phosphate + H(+) = (1S,2R)-1-C-(indol-3-yl)glycerol 3-phosphate + CO2 + H2O. The protein operates within amino-acid biosynthesis; L-tryptophan biosynthesis; L-tryptophan from chorismate: step 4/5. This is Indole-3-glycerol phosphate synthase from Laribacter hongkongensis (strain HLHK9).